Here is a 158-residue protein sequence, read N- to C-terminus: Glutathione peroxidase-like peroxiredoxin gpx1 (158 aa).

Residue Cys-36 is the Cysteine sulfenic acid (-SOH) intermediate of the active site. A disulfide bond links Cys-36 and Cys-82.

The protein belongs to the glutathione peroxidase family. Monomer.

It localises to the cytoplasm. The protein localises to the mitochondrion. The enzyme catalyses a hydroperoxide + [thioredoxin]-dithiol = an alcohol + [thioredoxin]-disulfide + H2O. In terms of biological role, glutathione peroxidase-like protein that protects cells during oxidative stress. Has peroxidase activity reducing hydrogen peroxide, alkyl and phospholipid hydroperoxides using preferentially thioredoxin as a reducing power. May act as a scavenger of H(2)O(2). The sequence is that of Glutathione peroxidase-like peroxiredoxin gpx1 from Schizosaccharomyces pombe (strain 972 / ATCC 24843) (Fission yeast).